Here is a 353-residue protein sequence, read N- to C-terminus: Glutamine synthetase cytosolic isozyme 1-5 (353 aa).

Threonine 2 carries the N-acetylthreonine modification. At serine 3 the chain carries Phosphoserine. The GS beta-grasp domain occupies 19–99; sequence IIAEYIWIGG…VMCDAYRPAG (81 aa). A GS catalytic domain is found at 106–353; sequence NRHKAVKIFD…TSMIAETTIL (248 aa).

Belongs to the glutamine synthetase family. Homooctamer. As to expression, not expressed in roots.

It is found in the cytoplasm. It catalyses the reaction L-glutamate + NH4(+) + ATP = L-glutamine + ADP + phosphate + H(+). This is Glutamine synthetase cytosolic isozyme 1-5 (GLN1-5) from Arabidopsis thaliana (Mouse-ear cress).